A 294-amino-acid chain; its full sequence is Eukaryotic translation initiation factor 3 subunit F (294 aa).

The region spanning 7-155 (VNVHPGVYMN…VRAYLRSKAG (149 aa)) is the MPN domain.

It belongs to the eIF-3 subunit F family. As to quaternary structure, component of the eukaryotic translation initiation factor 3 (eIF-3) complex.

It is found in the cytoplasm. In terms of biological role, component of the eukaryotic translation initiation factor 3 (eIF-3) complex, which is involved in protein synthesis of a specialized repertoire of mRNAs and, together with other initiation factors, stimulates binding of mRNA and methionyl-tRNAi to the 40S ribosome. The eIF-3 complex specifically targets and initiates translation of a subset of mRNAs involved in cell proliferation. This is Eukaryotic translation initiation factor 3 subunit F from Caenorhabditis elegans.